A 126-amino-acid polypeptide reads, in one-letter code: Histone H2B type 1-L (126 aa).

Residues 1–12 (MPELAKSAPAPK) are compositionally biased toward low complexity. The segment at 1 to 36 (MPELAKSAPAPKKGSKKAVTKAQKKDGKKRKRSRKE) is disordered. N-acetylproline is present on P2. The residue at position 3 (E3) is an ADP-ribosyl glutamic acid. K6 is modified (N6-(2-hydroxyisobutyryl)lysine; alternate). At K6 the chain carries N6-(beta-hydroxybutyryl)lysine; alternate. Position 6 is an N6-acetyllysine; alternate (K6). K6 carries the post-translational modification N6-butyryllysine; alternate. K6 carries the N6-crotonyllysine; alternate modification. K6 carries the N6-lactoyllysine; alternate modification. K6 is covalently cross-linked (Glycyl lysine isopeptide (Lys-Gly) (interchain with G-Cter in SUMO2); alternate). At S7 the chain carries ADP-ribosylserine. K12 carries the N6-(beta-hydroxybutyryl)lysine; alternate modification. Residues K12 and K13 each carry the N6-acetyllysine; alternate modification. An N6-crotonyllysine; alternate mark is found at K12 and K13. Position 12 is an N6-lactoyllysine; alternate (K12). N6-(2-hydroxyisobutyryl)lysine; alternate is present on K13. Residue S15 is modified to Phosphoserine; by STK4/MST1. 4 positions are modified to N6-acetyllysine; alternate: K16, K17, K21, and K24. An N6-crotonyllysine; alternate mark is found at K16, K17, K21, and K24. Residues K16, K17, K21, and K24 each carry the N6-lactoyllysine; alternate modification. K17 and K21 each carry N6-(beta-hydroxybutyryl)lysine; alternate. K17 bears the N6-glutaryllysine; alternate mark. Residues K21 and K24 each carry the N6-(2-hydroxyisobutyryl)lysine; alternate modification. N6-butyryllysine; alternate is present on K21. K21 is covalently cross-linked (Glycyl lysine isopeptide (Lys-Gly) (interchain with G-Cter in SUMO2); alternate). The residue at position 25 (K25) is an N6-(2-hydroxyisobutyryl)lysine. An N6-(2-hydroxyisobutyryl)lysine; alternate modification is found at K35. K35 carries the N6-(beta-hydroxybutyryl)lysine; alternate modification. K35 carries the post-translational modification N6-crotonyllysine; alternate. An N6-glutaryllysine; alternate modification is found at K35. Residue K35 is modified to N6-succinyllysine; alternate. K35 participates in a covalent cross-link: Glycyl lysine isopeptide (Lys-Gly) (interchain with G-Cter in ubiquitin); alternate. At E36 the chain carries PolyADP-ribosyl glutamic acid. Residue S37 is modified to Phosphoserine; by AMPK. An N6-(2-hydroxyisobutyryl)lysine; alternate mark is found at K44, K47, and K58. Position 44 is an N6-lactoyllysine; alternate (K44). 2 positions are modified to N6-glutaryllysine; alternate: K44 and K47. Position 47 is an N6-methyllysine; alternate (K47). K58 bears the N6,N6-dimethyllysine; alternate mark. R80 is subject to Dimethylated arginine. Position 86 is an N6-(2-hydroxyisobutyryl)lysine; alternate (K86). An N6-(beta-hydroxybutyryl)lysine; alternate modification is found at K86. N6-acetyllysine; alternate is present on K86. K86 carries the N6-lactoyllysine; alternate modification. K86 carries the post-translational modification N6,N6,N6-trimethyllysine; alternate. An omega-N-methylarginine mark is found at R87 and R93. K109 carries the N6-(2-hydroxyisobutyryl)lysine; alternate modification. Position 109 is an N6-lactoyllysine; alternate (K109). K109 bears the N6-glutaryllysine; alternate mark. K109 carries the N6-methyllysine; alternate modification. The O-linked (GlcNAc) serine glycan is linked to S113. Position 116 is a phosphothreonine (T116). Residues K117 and K121 each carry the N6-(2-hydroxyisobutyryl)lysine; alternate modification. 2 positions are modified to N6-(beta-hydroxybutyryl)lysine; alternate: K117 and K121. 2 positions are modified to N6-lactoyllysine; alternate: K117 and K121. K117 and K121 each carry N6-glutaryllysine; alternate. K117 and K121 each carry N6-succinyllysine; alternate. K117 carries the post-translational modification N6-malonyllysine; alternate. K117 bears the N6-methylated lysine; alternate mark. K121 participates in a covalent cross-link: Glycyl lysine isopeptide (Lys-Gly) (interchain with G-Cter in ubiquitin); alternate.

Belongs to the histone H2B family. In terms of assembly, the nucleosome is a histone octamer containing two molecules each of H2A, H2B, H3 and H4 assembled in one H3-H4 heterotetramer and two H2A-H2B heterodimers. The octamer wraps approximately 147 bp of DNA. Monoubiquitination at Lys-35 (H2BK34Ub) by the MSL1/MSL2 dimer is required for histone H3 'Lys-4' (H3K4me) and 'Lys-79' (H3K79me) methylation and transcription activation at specific gene loci, such as HOXA9 and MEIS1 loci. Similarly, monoubiquitination at Lys-121 (H2BK120Ub) by the RNF20/40 complex gives a specific tag for epigenetic transcriptional activation and is also prerequisite for histone H3 'Lys-4' and 'Lys-79' methylation. It also functions cooperatively with the FACT dimer to stimulate elongation by RNA polymerase II. H2BK120Ub also acts as a regulator of mRNA splicing: deubiquitination by USP49 is required for efficient cotranscriptional splicing of a large set of exons. In terms of processing, phosphorylation at Ser-37 (H2BS36ph) by AMPK in response to stress promotes transcription. Phosphorylated on Ser-15 (H2BS14ph) by STK4/MST1 during apoptosis; which facilitates apoptotic chromatin condensation. Also phosphorylated on Ser-15 in response to DNA double strand breaks (DSBs), and in correlation with somatic hypermutation and immunoglobulin class-switch recombination. Post-translationally, glcNAcylation at Ser-113 promotes monoubiquitination of Lys-121. It fluctuates in response to extracellular glucose, and associates with transcribed genes. ADP-ribosylated by PARP1 or PARP2 on Ser-7 (H2BS6ADPr) in response to DNA damage. H2BS6ADPr promotes recruitment of CHD1L. Mono-ADP-ribosylated on Glu-3 (H2BE2ADPr) by PARP3 in response to single-strand breaks. Poly ADP-ribosylation on Glu-36 (H2BE35ADPr) by PARP1 regulates adipogenesis: it inhibits phosphorylation at Ser-37 (H2BS36ph), thereby blocking expression of pro-adipogenetic genes. In terms of processing, crotonylation (Kcr) is specifically present in male germ cells and marks testis-specific genes in post-meiotic cells, including X-linked genes that escape sex chromosome inactivation in haploid cells. Crotonylation marks active promoters and enhancers and confers resistance to transcriptional repressors. It is also associated with post-meiotically activated genes on autosomes. Post-translationally, lactylated in macrophages by EP300/P300 by using lactoyl-CoA directly derived from endogenous or exogenous lactate, leading to stimulates gene transcription.

It localises to the nucleus. It is found in the chromosome. Core component of nucleosome. Nucleosomes wrap and compact DNA into chromatin, limiting DNA accessibility to the cellular machineries which require DNA as a template. Histones thereby play a central role in transcription regulation, DNA repair, DNA replication and chromosomal stability. DNA accessibility is regulated via a complex set of post-translational modifications of histones, also called histone code, and nucleosome remodeling. This chain is Histone H2B type 1-L, found in Homo sapiens (Human).